Consider the following 160-residue polypeptide: Tumor suppressor ARF (160 aa).

The interval 1 to 63 (MGRRFVVTVR…RRGPQPHPGP (63 aa)) is interaction with CDK5RAP3 and MDM2. 2 disordered regions span residues 49–74 (PERI…QSGS) and 90–116 (HPLP…GRGA).

In terms of assembly, does not interact with cyclins, CDK1, CDK2, CDK4, CDK5 or CDK6. Binds to BCL6, E2F1, HUWE1, MDM2, MYC, NPM1/B23, TOP1/TOPOI and UBE2I/UBC9. Interacts with TBRG1 and COMMD1. Interacts with CDKN2AIP and E4F1. Interacts with CDK5RAP3 and MDM2; form a ternary complex involved in regulation of p53/TP53. Interacts with NOP53; the interaction is direct and promotes ARF nucleoplasmic relocalization and ubiquitin-mediated proteasomal degradation. Interacts with TTF1 (via the N-terminal region (NRD) and a C-terminal region); the interaction is direct and inhibits the nucleolar localization of TTF1. In terms of processing, ubiquitinated in normal cells by TRIP12 via the ubiquitin fusion degradation (UFD) pathway, a process that mediates ubiquitination at the N-terminus, regardless of the absence of lysine residues. Ubiquitination leads to its proteasomal degradation. In cancer cells, however, TRIP12 is located in a different cell compartment, preventing ubiquitination and degradation. Widely expressed with very low levels in kidney and colon.

It localises to the nucleus. Its subcellular location is the nucleolus. The protein resides in the nucleoplasm. In terms of biological role, capable of inducing cell cycle arrest in G1 and G2 phases. Acts as a tumor suppressor. Binds to MDM2 and blocks its nucleocytoplasmic shuttling by sequestering it in the nucleolus. This inhibits the oncogenic action of MDM2 by blocking MDM2-induced degradation of p53 and enhancing p53-dependent transactivation and apoptosis. Also induces G2 arrest and apoptosis in a p53-independent manner by preventing the activation of cyclin B1/CDC2 complexes. Binds to BCL6 and down-regulates BCL6-induced transcriptional repression. Binds to E2F1 and MYC and blocks their transcriptional activator activity but has no effect on MYC transcriptional repression. Binds to TOP1/TOPOI and stimulates its activity. This complex binds to rRNA gene promoters and may play a role in rRNA transcription and/or maturation. Interacts with NPM1/B23 and promotes its polyubiquitination and degradation, thus inhibiting rRNA processing. Plays a role in inhibiting ribosome biogenesis, perhaps by binding to the nucleolar localization sequence of transcription termination factor TTF1, and thereby preventing nucleolar localization of TTF1. Interacts with COMMD1 and promotes its 'Lys63'-linked polyubiquitination. Interacts with UBE2I/UBC9 and enhances sumoylation of a number of its binding partners including MDM2 and E2F1. Binds to HUWE1 and represses its ubiquitin ligase activity. May play a role in controlling cell proliferation and apoptosis during mammary gland development. The chain is Tumor suppressor ARF from Rattus norvegicus (Rat).